Reading from the N-terminus, the 560-residue chain is E3 SUMO-protein ligase CBX4 (560 aa).

Residues 1–75 are involved in interaction with H3C15 and H3C1; sequence MELPAVGEHV…LMGYRKRGPK (75 aa). Residues 1-539 form an interaction with BMI1 region; that stretch reads MELPAVGEHV…LSEFKPFFGN (539 aa). Positions 11-69 constitute a Chromo domain; the sequence is FAVESIEKKRIRKGRVEYLVKWRGWSPKYNTWEPEENILDPRLLIAFQNRERQEQLMGY. Glycyl lysine isopeptide (Lys-Gly) (interchain with G-Cter in SUMO2) cross-links involve residues K77, K106, K114, and K125. Positions 92 to 152 are disordered; sequence VLTGLQDSST…PPGKSGKYYY (61 aa). The residue at position 149 (K149) is an N6-acetyllysine; alternate. K149 participates in a covalent cross-link: Glycyl lysine isopeptide (Lys-Gly) (interchain with G-Cter in SUMO2); alternate. Glycyl lysine isopeptide (Lys-Gly) (interchain with G-Cter in SUMO2) cross-links involve residues K157, K167, and K178. Position 182 is a phosphoserine (S182). Glycyl lysine isopeptide (Lys-Gly) (interchain with G-Cter in SUMO2) cross-links involve residues K191, K205, K212, K223, K249, K268, K278, and K280. A disordered region spans residues 217-243; sequence AAGAPGKGSEKGPPNGMMPAPKEAVTG. 2 stretches are compositionally biased toward basic and acidic residues: residues 281-291 and 298-331; these read SGEVAEGEARS and AADERHPPADRTFKKAAGAEEKKVEAPPKRREEE. The disordered stretch occupies residues 281 to 404; the sequence is SGEVAEGEAR…HHHHHHAVGL (124 aa). Glycyl lysine isopeptide (Lys-Gly) (interchain with G-Cter in SUMO2) cross-links involve residues K320, K352, and K365. Residues 380-401 are compositionally biased toward basic residues; the sequence is PSHHPHPHPHHHHHHHHHHHHA. The residue at position 467 (S467) is a Phosphoserine. K494 is covalently cross-linked (Glycyl lysine isopeptide (Lys-Gly) (interchain with G-Cter in SUMO2); alternate). Residue K494 forms a Glycyl lysine isopeptide (Lys-Gly) (interchain with G-Cter in SUMO); alternate linkage. T497 is modified (phosphothreonine; by HIPK2). The span at 509-521 shows a compositional bias: low complexity; sequence AAPTTTAEKPPAE. The tract at residues 509–528 is disordered; it reads AAPTTTAEKPPAEAQDEPAE. The interval 531 to 556 is involved in interaction with H3C15 and RNF2; the sequence is SEFKPFFGNIIITDVTANCLTVTFKE. Residues 540 to 560 are interaction with RNF2; the sequence is IIITDVTANCLTVTFKEYVTV.

Interacts with histone H3-K9Me3. Interacts with CHTOP. Component of a PRC1-like complex. The composition of the PRC1 complex differs between the PRC1 complex in pluripotent embryonic stem cells containing RNF2, CBX7 and PCGF2, and the PRC1 complex in differentiating cells containing RNF2, CBX2, CBX4 and BMI1. Self-associates. Interacts with SUV39H1 and HIPK2. Interacts with CSNK2B. May interact with H3C15, H3C1 and RNF2. Interacts with SUMO1P1/SUMO5. Interacts with PRDM1/Blimp-1. In terms of processing, ubiquitinated. Ubiquitination regulates the function of the Polycomb group (PcG) multiprotein PRC1-like complex. Deubiquitinated by USP26. Post-translationally, phosphorylated on Thr-497 by HIPK2 upon DNA damage. This phosphorylation stimulates E3 SUMO-protein ligase activity and promotes sumoylation on Lys-494, as well as sumoylation of other target proteins, such as HNRNPK. Ubiquitous.

It is found in the nucleus. Its subcellular location is the nucleus speckle. It functions in the pathway protein modification; protein sumoylation. E3 SUMO-protein ligase that catalyzes sumoylation of target proteins by promoting the transfer of SUMO from the E2 enzyme to the substrate. Involved in the sumoylation of HNRNPK, a p53/TP53 transcriptional coactivator, hence indirectly regulates p53/TP53 transcriptional activation resulting in p21/CDKN1A expression. Monosumoylates ZNF131. Its function is as follows. Component of a Polycomb group (PcG) multiprotein PRC1-like complex, a complex class required to maintain the transcriptionally repressive state of many genes, including Hox genes, throughout development. PcG PRC1 complex acts via chromatin remodeling and modification of histones; it mediates monoubiquitination of histone H2A 'Lys-119', rendering chromatin heritably changed in its expressibility. Binds to histone H3 trimethylated at 'Lys-9' (H3K9me3). Plays a role in the lineage differentiation of the germ layers in embryonic development. This chain is E3 SUMO-protein ligase CBX4 (CBX4), found in Homo sapiens (Human).